A 229-amino-acid polypeptide reads, in one-letter code: Large ribosomal subunit protein uL1 (229 aa).

Belongs to the universal ribosomal protein uL1 family. Part of the 50S ribosomal subunit.

Binds directly to 23S rRNA. The L1 stalk is quite mobile in the ribosome, and is involved in E site tRNA release. Functionally, protein L1 is also a translational repressor protein, it controls the translation of the L11 operon by binding to its mRNA. The protein is Large ribosomal subunit protein uL1 of Flavobacterium johnsoniae (strain ATCC 17061 / DSM 2064 / JCM 8514 / BCRC 14874 / CCUG 350202 / NBRC 14942 / NCIMB 11054 / UW101) (Cytophaga johnsonae).